Consider the following 462-residue polypeptide: Glycogen synthase 1 (462 aa).

Residue Arg6 participates in ADP-alpha-D-glucose binding.

It belongs to the glycosyltransferase 1 family. Bacterial/plant glycogen synthase subfamily.

The enzyme catalyses [(1-&gt;4)-alpha-D-glucosyl](n) + ADP-alpha-D-glucose = [(1-&gt;4)-alpha-D-glucosyl](n+1) + ADP + H(+). It functions in the pathway glycan biosynthesis; glycogen biosynthesis. Functionally, synthesizes alpha-1,4-glucan chains using ADP-glucose. The polypeptide is Glycogen synthase 1 (Bradyrhizobium diazoefficiens (strain JCM 10833 / BCRC 13528 / IAM 13628 / NBRC 14792 / USDA 110)).